The chain runs to 126 residues: Glycine cleavage system H protein (126 aa).

The Lipoyl-binding domain maps to Val22–Lys104. Lys63 carries the post-translational modification N6-lipoyllysine.

Belongs to the GcvH family. The glycine cleavage system is composed of four proteins: P, T, L and H. It depends on (R)-lipoate as a cofactor.

Functionally, the glycine cleavage system catalyzes the degradation of glycine. The H protein shuttles the methylamine group of glycine from the P protein to the T protein. In Porphyromonas gingivalis (strain ATCC 33277 / DSM 20709 / CIP 103683 / JCM 12257 / NCTC 11834 / 2561), this protein is Glycine cleavage system H protein.